A 701-amino-acid chain; its full sequence is DNA ligase 2 (701 aa).

Positions M1–P10 are enriched in polar residues. The disordered stretch occupies residues M1–A21. NAD(+)-binding positions include D64–D68, S111–L112, and E133. The active-site N6-AMP-lysine intermediate is K135. The NAD(+) site is built by R156, E189, K302, and K326. Residues C420, C423, C436, and C441 each contribute to the Zn(2+) site. Positions K603–P613 are enriched in low complexity. The disordered stretch occupies residues K603 to M623. Residues L615–V701 enclose the BRCT domain.

This sequence belongs to the NAD-dependent DNA ligase family. LigA subfamily. It depends on Mg(2+) as a cofactor. Mn(2+) is required as a cofactor.

The enzyme catalyses NAD(+) + (deoxyribonucleotide)n-3'-hydroxyl + 5'-phospho-(deoxyribonucleotide)m = (deoxyribonucleotide)n+m + AMP + beta-nicotinamide D-nucleotide.. In terms of biological role, DNA ligase that catalyzes the formation of phosphodiester linkages between 5'-phosphoryl and 3'-hydroxyl groups in double-stranded DNA using NAD as a coenzyme and as the energy source for the reaction. It is essential for DNA replication and repair of damaged DNA. This Pseudarthrobacter chlorophenolicus (strain ATCC 700700 / DSM 12829 / CIP 107037 / JCM 12360 / KCTC 9906 / NCIMB 13794 / A6) (Arthrobacter chlorophenolicus) protein is DNA ligase 2.